Here is a 634-residue protein sequence, read N- to C-terminus: 1-deoxy-D-xylulose-5-phosphate synthase (634 aa).

Residues histidine 74 and alanine 115–serine 117 each bind thiamine diphosphate. Aspartate 146 serves as a coordination point for Mg(2+). Residues glycine 147–alanine 148, asparagine 176, tyrosine 283, and glutamate 365 each bind thiamine diphosphate. Asparagine 176 provides a ligand contact to Mg(2+).

It belongs to the transketolase family. DXPS subfamily. Homodimer. Mg(2+) is required as a cofactor. Thiamine diphosphate serves as cofactor.

The enzyme catalyses D-glyceraldehyde 3-phosphate + pyruvate + H(+) = 1-deoxy-D-xylulose 5-phosphate + CO2. It functions in the pathway metabolic intermediate biosynthesis; 1-deoxy-D-xylulose 5-phosphate biosynthesis; 1-deoxy-D-xylulose 5-phosphate from D-glyceraldehyde 3-phosphate and pyruvate: step 1/1. Functionally, catalyzes the acyloin condensation reaction between C atoms 2 and 3 of pyruvate and glyceraldehyde 3-phosphate to yield 1-deoxy-D-xylulose-5-phosphate (DXP). The sequence is that of 1-deoxy-D-xylulose-5-phosphate synthase from Burkholderia mallei (strain ATCC 23344).